The chain runs to 715 residues: Gelsolin, cytoplasmic (715 aa).

The tract at residues 1 to 124 (MTTELEIQKA…YLIGGVASGF (124 aa)) is actin-severing. One copy of the Gelsolin-like 1 repeat lies at 24-75 (FELVPVPKTNHGKFYTGDSYIILKTTALESGRGFEWNLHYWQGKESSQDERG). Positions 72 to 75 (DERG) are actin-actin interfilament contact point. 136-145 (KVLTRVKGKR) lines the a 1,2-diacyl-sn-glycero-3-phospho-(1D-myo-inositol-4,5-bisphosphate) pocket. 3 Gelsolin-like repeats span residues 147–187 (VRAT…FEKN), 260–306 (LKIT…TERA), and 405–451 (LRKE…NERT). Positions 384-715 (AAESKMIDDG…FLGWDKTLWD (332 aa)) are actin-binding, Ca-sensitive. Residues Gly-421, Asp-422, Glu-449, Thr-499, Asn-539, Asp-540, Glu-562, Asp-642, and Glu-665 each coordinate Ca(2+). 2 Gelsolin-like repeats span residues 524 to 564 (CRAV…SEIQ) and 625 to 667 (FIAE…EEKM).

Belongs to the villin/gelsolin family. In terms of tissue distribution, predominantly in the body wall muscle, but expression is not restricted to muscle cells.

The protein localises to the cytoplasm. The protein resides in the cytoskeleton. Functionally, calcium-regulated, actin-modulating protein that binds to the plus (or barbed) ends of actin monomers or filaments, preventing monomer exchange (end-blocking or capping). It can promote the assembly of monomers into filaments (nucleation) as well as sever filaments already formed. In Halocynthia roretzi (Sea squirt), this protein is Gelsolin, cytoplasmic.